Consider the following 485-residue polypeptide: GTPase Der (485 aa).

2 consecutive EngA-type G domains span residues 3-167 (PTIA…PEPE) and 176-349 (PVFA…NAAM). Residues 9-16 (GRPNVGKS), 56-60 (DTGGF), 119-122 (NKGE), 182-189 (GRPNVGKS), 229-233 (DTAGV), and 294-297 (NKWD) each bind GTP. Residues 350–434 (IKMPTPKITR…PLRIQYNVSE (85 aa)) enclose the KH-like domain. The tract at residues 435 to 485 (NPYENAEDKPKKKPLRRVSLSNRIEKREGRKEEKNRFKKKTKVSVKKQFSK) is disordered. Positions 457–469 (RIEKREGRKEEKN) are enriched in basic and acidic residues. Basic residues predominate over residues 470–485 (RFKKKTKVSVKKQFSK).

It belongs to the TRAFAC class TrmE-Era-EngA-EngB-Septin-like GTPase superfamily. EngA (Der) GTPase family. In terms of assembly, associates with the 50S ribosomal subunit.

Functionally, GTPase that plays an essential role in the late steps of ribosome biogenesis. In Neisseria meningitidis serogroup C / serotype 2a (strain ATCC 700532 / DSM 15464 / FAM18), this protein is GTPase Der.